The chain runs to 981 residues: Ubiquitin carboxyl-terminal hydrolase 37 (981 aa).

The short motif at 32-34 (KEN) is the KEN box 1 element. 2 short sequence motifs (D-box) span residues 71-79 (RLMLTLQDN) and 96-105 (RLFLDAVHQN). The disordered stretch occupies residues 111-308 (MKPSQGSGSF…SAKRSLGFLP (198 aa)). Phosphoserine is present on serine 114. Positions 135–148 (RQLSYSDNQASSKR) are enriched in polar residues. Residues 149-159 (GSLETKDDIPF) show a composition bias toward basic and acidic residues. A D-box 3 motif is present at residues 160–168 (RKVLGNPGR). Position 170 is a phosphoserine (serine 170). Residues 172–195 (KTATGSGITVTRTIPSLTSASTPL) show a composition bias toward polar residues. A Phosphoserine modification is found at serine 212. The short motif at 223–225 (KEN) is the KEN box 2 element. Residues 245–259 (SREKQLSLKQSEENR) show a composition bias toward basic and acidic residues. The span at 266–300 (LQSSSFYGSRTGSKDYSSGSTNLDRTNVSGQTPSA) shows a compositional bias: polar residues. The region spanning 343–953 (QGFSNLGNTC…SGYIFFYMHK (611 aa)) is the USP domain. The active-site Nucleophile is the cysteine 352. The residue at position 630 (serine 630) is a Phosphoserine; by CDK2. A phosphoserine mark is found at serine 652 and serine 654. Disordered stretches follow at residues 673-704 (GCEQ…GFDG) and 719-831 (KREA…EQKE). Composition is skewed to basic and acidic residues over residues 683–697 (KDSK…KSEL) and 719–734 (KREA…DDKP). The 20-residue stretch at 706–725 (SEEELLAAVLEMSKREASPT) folds into the UIM 1 domain. The residue at position 772 (serine 772) is a Phosphoserine. Positions 776 to 788 (ITKDCDENKENKT) are enriched in basic and acidic residues. Positions 784–786 (KEN) match the KEN box 3 motif. 2 UIM domains span residues 808-827 (REEQ…QEAW) and 830-849 (KEDD…FNNS). Residues 813-824 (LQQALAQSLQEQ) show a composition bias toward low complexity. Histidine 908 serves as the catalytic Proton acceptor.

The protein belongs to the peptidase C19 family. As to quaternary structure, interacts with FZR1/CDH1. Interacts with CDT1. Polyubiquitinated via 'Lys-11'-linked ubiquitin by the APC(CDH1) complex during late mitosis, leading to its degradation. Able to mediate auto-deubiquitination. Post-translationally, phosphorylated at Ser-630 by CDK2 during G1/S phase but not during mitosis; phosphorylation at Ser-630 is required for deubiquitinase activity. Also polyubiquitinated during early G1 phase, without leading to degradation. Phosphorylated at Ser-114 by ATM following DNA damage, which in turn increases its deubiquitination activity towards BLM.

Its subcellular location is the nucleus. The protein localises to the chromosome. It carries out the reaction Thiol-dependent hydrolysis of ester, thioester, amide, peptide and isopeptide bonds formed by the C-terminal Gly of ubiquitin (a 76-residue protein attached to proteins as an intracellular targeting signal).. Its function is as follows. Deubiquitinase that plays a role in different processes including cell cycle regulation, DNA replication or DNA damage response. Antagonizes the anaphase-promoting complex (APC/C) during G1/S transition by mediating deubiquitination of cyclin-A (CCNA1 and CCNA2), thereby promoting S phase entry. Specifically mediates deubiquitination of 'Lys-11'-linked polyubiquitin chains, a specific ubiquitin-linkage type mediated by the APC/C complex. Phosphorylation at Ser-628 during G1/S phase maximizes the deubiquitinase activity, leading to prevent degradation of cyclin-A (CCNA1 and CCNA2). Plays an important role in the regulation of DNA replication by stabilizing the licensing factor CDT1. Also plays an essential role beyond S-phase entry to promote the efficiency and fidelity of replication by deubiquitinating checkpoint kinase 1/CHK1, promoting its stability. Sustains the DNA damage response (DDR) by deubiquitinating and stabilizing the ATP-dependent DNA helicase BLM. Mechanistically, DNA double-strand breaks (DSB) promotes ATM-mediated phosphorylation of USP37 and enhances the binding between USP37 and BLM. Promotes cell migration by deubiquitinating and stabilizing the epithelial-mesenchymal transition (EMT)-inducing transcription factor SNAI. Plays a role in the regulation of mitotic spindle assembly and mitotic progression by associating with chromatin-associated WAPL and stabilizing it through deubiquitination. The chain is Ubiquitin carboxyl-terminal hydrolase 37 (USP37) from Canis lupus familiaris (Dog).